Consider the following 161-residue polypeptide: Large ribosomal subunit protein uL11 (161 aa).

Belongs to the universal ribosomal protein uL11 family. As to quaternary structure, part of the ribosomal stalk of the 50S ribosomal subunit. Interacts with L10 and the large rRNA to form the base of the stalk. L10 forms an elongated spine to which L12 dimers bind in a sequential fashion forming a multimeric L10(L12)X complex.

Forms part of the ribosomal stalk which helps the ribosome interact with GTP-bound translation factors. This is Large ribosomal subunit protein uL11 from Methanosarcina acetivorans (strain ATCC 35395 / DSM 2834 / JCM 12185 / C2A).